The primary structure comprises 559 residues: MKKHRRKVSEPLPELSEKAKEQLAEAELRKLRQQFRKMVDSRKSSNFRNQRMIASQYKEIENLKAEQAETTLLLSLVKSPKNLDLNQKNFTELRFLLQTKGDYEALISSMKVLLGELDDKIVQMERKITNQRQIFLKTQEANNPRKLQKQIHILETRLNLVTVHFDTMLTSNAQLRKDIEDLLFEKAAYDHVYQQLQRRLQTQKKTMNVAIEQSTQAYEQRVEAMARMAAMKDRQQKDISQYNLEIRELERLYDHENKLKSFLLVKLNDRTEFEDQAKKQEAVKIKKHGKKRKGESFESYEVAHLRLLKLAENGDLNQLTEDFLAKEEKNFARFTYVTELNNDMETMHKRTQRIQDDIINLRSQQQSSHEGTRNILKQMEEKLRKTTEDTDIYENRYREMSKTLEYLKNSVEKLFKKINCNATEILGKLGETGKITDSNLQQYFAIIEKKTNDLLLLESFRRLQEAEGPDVDVPQPFVNPFWGGSALLKPPEPLRVVPPVFGADSFSDKVEEVPHRALSWVQWNTLWTTVASGSWSWRTTFRRNEEKNHRRHCWRRGTR.

Coiled coils occupy residues 14-70, 185-261, and 364-414; these read ELSE…QAET, EKAA…KLKS, and QQQS…VEKL.

In terms of biological role, plays a role in spermiogenesis. Involved in the elongation of flagella and the formation of sperm heads. The chain is Coiled-coil domain-containing protein 63 from Rattus norvegicus (Rat).